Reading from the N-terminus, the 299-residue chain is UDP-N-acetylenolpyruvoylglucosamine reductase (299 aa).

The FAD-binding PCMH-type domain occupies 28-193 (KVGGPADILA…LSAKFELQAG (166 aa)). R172 is an active-site residue. S222 functions as the Proton donor in the catalytic mechanism. E292 is an active-site residue.

The cofactor is FAD.

Its subcellular location is the cytoplasm. The catalysed reaction is UDP-N-acetyl-alpha-D-muramate + NADP(+) = UDP-N-acetyl-3-O-(1-carboxyvinyl)-alpha-D-glucosamine + NADPH + H(+). The protein operates within cell wall biogenesis; peptidoglycan biosynthesis. Cell wall formation. In Lactococcus lactis subsp. cremoris (strain MG1363), this protein is UDP-N-acetylenolpyruvoylglucosamine reductase.